The primary structure comprises 450 residues: Methionine aminopeptidase 2 (450 aa).

A disordered region spans residues 1-99 (MAVQAPEVDK…LFPNSQYPEG (99 aa)). The span at 33-49 (GDEDAENEESDEDDDQG) shows a compositional bias: acidic residues. Residues 60-75 (KKKRKRKPKKKKKKGV) are compositionally biased toward basic residues. Residue H200 coordinates substrate. Residues D220, D231, and H300 each contribute to the a divalent metal cation site. H308 is a binding site for substrate. A divalent metal cation-binding residues include E336 and E431.

It belongs to the peptidase M24A family. Methionine aminopeptidase eukaryotic type 2 subfamily. Co(2+) serves as cofactor. Zn(2+) is required as a cofactor. It depends on Mn(2+) as a cofactor. Requires Fe(2+) as cofactor.

It is found in the cytoplasm. It carries out the reaction Release of N-terminal amino acids, preferentially methionine, from peptides and arylamides.. In terms of biological role, cotranslationally removes the N-terminal methionine from nascent proteins. The N-terminal methionine is often cleaved when the second residue in the primary sequence is small and uncharged (Met-Ala-, Cys, Gly, Pro, Ser, Thr, or Val). This is Methionine aminopeptidase 2 from Uncinocarpus reesii (strain UAMH 1704).